A 323-amino-acid polypeptide reads, in one-letter code: Serine/threonine-protein phosphatase PP1-gamma catalytic subunit (323 aa).

Ala-2 is modified (N-acetylalanine). Mn(2+)-binding residues include Asp-64, His-66, Asp-92, and Asn-124. His-125 serves as the catalytic Proton donor. The Mn(2+) site is built by His-173 and His-248. The tract at residues Lys-302–Lys-323 is disordered. 2 positions are modified to phosphothreonine: Thr-307 and Thr-311.

It belongs to the PPP phosphatase family. PP-1 subfamily. PP1 comprises a catalytic subunit, PPP1CA, PPP1CB or PPP1CC, which is folded into its native form by inhibitor 2 and glycogen synthetase kinase 3, and then complexed to one or several targeting or regulatory subunits. PPP1R12A, PPP1R12B and PPP1R12C mediate binding to myosin. PPP1R3A (in skeletal muscle), PPP1R3B (in sliver), PPP1R3C, PPP1R3D and PPP1R3F (in brain) mediate binding to glycogen. PPP1R15A and PPP1R15B mediate binding to EIF2S1. Part of a complex containing PPP1R15B, PP1 and NCK1/2. Interacts with PPP1R3B, PPP1R7 and CDCA2. Isoform 2 interacts with SPZ1. Interacts with IKFZ1; the interaction targets PPP1CC to pericentromeric heterochromatin, dephosphorylates IKAROS, stabilizes it and prevents it from degradation. Interacts with NOM1 and PPP1R8. Component of the PTW/PP1 phosphatase complex, composed of PPP1R10/PNUTS, TOX4, WDR82, and PPP1CA or PPP1CB or PPP1CC. Interacts with PPP1R8. Interacts with NEK2. Interacts with URI1; the interaction is phosphorylation-dependent and occurs in a growth factor-dependent manner. Interacts with FOXP3. Interacts with TMEM225 (via RVxF motif). Interacts with MKI67. Interacts with RRP1B; this targets PPP1CC to the nucleolus. Found in a complex with PPP1CA, PPP1CC, SHC1 and PEAK1. Interacts with DYNLT4. Interacts (via RVxF motif) with FIRRM; regulates PLK1 kinase activity. Interacts with the KNL1 complex subunit KNL1; the interaction is direct and mutually exclusive with KNL1 binding to microtubules. Component of the SHOC2-MRAS-PP1c (SMP) complex consisting of SHOC2, GTP-bound M-Ras/MRAS and the catalytic subunit of protein phosphatase 1 (either PPP1CA, PPP1CB or PPP1CC). SHOC2 and PP1c preferably bind M-Ras/MRAS, but they also bind K-Ras/KRAS, N-Ras/NRAS and H-Ras/HRAS; these interactions are GTP-dependent and both SHOC2 and PP1c are required to form a stable complex. Interacts with SHOC2 in the absence of Ras GTPases. Mn(2+) is required as a cofactor. In terms of processing, phosphorylated by NEK2. In terms of tissue distribution, isoform 2 is expressed only in testis, in the late spermatocytes and early spematids (at protein level).

The protein localises to the cytoplasm. It localises to the nucleus. Its subcellular location is the cleavage furrow. The protein resides in the nucleolus. It is found in the nucleoplasm. The protein localises to the chromosome. It localises to the centromere. Its subcellular location is the kinetochore. The protein resides in the nucleus speckle. It is found in the midbody. The protein localises to the mitochondrion. It localises to the cytoskeleton. Its subcellular location is the microtubule organizing center. The enzyme catalyses O-phospho-L-seryl-[protein] + H2O = L-seryl-[protein] + phosphate. It catalyses the reaction O-phospho-L-threonyl-[protein] + H2O = L-threonyl-[protein] + phosphate. Its activity is regulated as follows. Inactivated by binding to URI1. Functionally, protein phosphatase that associates with over 200 regulatory proteins to form highly specific holoenzymes which dephosphorylate hundreds of biological targets. Protein phosphatase 1 (PP1) is essential for cell division, and participates in the regulation of glycogen metabolism, muscle contractility and protein synthesis. Dephosphorylates RPS6KB1. Involved in regulation of ionic conductances and long-term synaptic plasticity. May play an important role in dephosphorylating substrates such as the postsynaptic density-associated Ca(2+)/calmodulin dependent protein kinase II. Component of the PTW/PP1 phosphatase complex, which plays a role in the control of chromatin structure and cell cycle progression during the transition from mitosis into interphase. In balance with CSNK1D and CSNK1E, determines the circadian period length, through the regulation of the speed and rhythmicity of PER1 and PER2 phosphorylation. May dephosphorylate CSNK1D and CSNK1E. Regulates the recruitment of the SKA complex to kinetochores. Core component of the SHOC2-MRAS-PP1c (SMP) holophosphatase complex that regulates the MAPK pathway activation. Dephosphorylates MKI67 at the onset of anaphase. The SMP complex specifically dephosphorylates the inhibitory phosphorylation at 'Ser-259' of RAF1 kinase, 'Ser-365' of BRAF kinase and 'Ser-214' of ARAF kinase, stimulating their kinase activities. The SMP complex enhances the dephosphorylation activity and substrate specificity of PP1c. Its function is as follows. Required for normal male fertility. The polypeptide is Serine/threonine-protein phosphatase PP1-gamma catalytic subunit (Ppp1cc) (Rattus norvegicus (Rat)).